The chain runs to 20 residues: Cytotoxin drCT-1 (20 aa).

The protein belongs to the three-finger toxin family. Short-chain subfamily. Type IA cytotoxin sub-subfamily. As to quaternary structure, monomer in solution; Homodimer and oligomer in the presence of negatively charged lipids forming a pore with a size ranging between 20 and 30 Angstroms. Expressed by the venom gland.

The protein resides in the secreted. It localises to the target cell membrane. In terms of biological role, this three-finger cytotoxin has antiproliferative, cytotoxic and apoptotic activities. Both in vivo and in vitro experimental results suggests that this protein possess anticancer potential. Also shows neurotoxicity, cardiotoxicity and myotoxicity. The protein is Cytotoxin drCT-1 of Daboia russelii (Russel's viper).